Here is a 476-residue protein sequence, read N- to C-terminus: WD repeat, SAM and U-box domain-containing protein 1 (476 aa).

WD repeat units follow at residues 10 to 47, 52 to 91, 95 to 134, 137 to 176, 178 to 228, 237 to 276, and 279 to 318; these read DHGDDVNCCAFSFSLLATCSLDKTIRLYSLRDFTELPH, FHTYAVHCCCFSPSGHILASCSTDGTTVLWNTENGQMLAV, PSGSPVRVCQFSPDSTCLASGAADGTVVLWNAQSYKLYRC, VKDGSLAACAFSPNGSFFVTGSSCGDLTVWDDKMRCLHSE, AHDL…LGFE, GHCAPVLACAFSHDGQMLVSGSVDKSVIVYDTNTENILHT, and QHTRYVTTCAFAPNTLLLATGSMDKTVNIWQFDLETLCQA. The SAM domain maps to 332–396; sequence WSEEDVSTWL…LRKIEELRTK (65 aa). The 74-residue stretch at 403–476 folds into the U-box domain; sequence GIPDEFICPI…INRWLETHQK (74 aa). Threonine 458 is subject to Phosphothreonine.

In Homo sapiens (Human), this protein is WD repeat, SAM and U-box domain-containing protein 1 (WDSUB1).